A 124-amino-acid polypeptide reads, in one-letter code: ATP synthase epsilon chain (124 aa).

It belongs to the ATPase epsilon chain family. As to quaternary structure, F-type ATPases have 2 components, CF(1) - the catalytic core - and CF(0) - the membrane proton channel. CF(1) has five subunits: alpha(3), beta(3), gamma(1), delta(1), epsilon(1). CF(0) has three main subunits: a, b and c.

The protein localises to the cell membrane. Produces ATP from ADP in the presence of a proton gradient across the membrane. The chain is ATP synthase epsilon chain from Streptomyces griseus subsp. griseus (strain JCM 4626 / CBS 651.72 / NBRC 13350 / KCC S-0626 / ISP 5235).